The chain runs to 452 residues: MSLHIIILAAGQGTRMKSELPKVMHCVAGKPLVQHVIDTARRLEPENITVVYGHKGDVVQAGVSGPGLLWAHQAEQLGTGHAVAQGLQNLSDDGQALILYGDVPLTSAATLKNFLAVSQGKLGVLTVTLDNPTGYGRIVRNDAGSVISIVEQKDATEAQKAINEINTGIMAVPVSRLKEWLPKLSNSNAQGEYYLTDIVALAVESGVDIVTAQPSFLHEVEGVNNRIQLAALERAYQQQVAEELMLAGATLRDPARVDVRGVLNVGRDVEIDVNAVFEGDVTLGDRVKIGPNCVIRNAVIANDVTIEASSIIEDARIDAFATVGPFARLRPGAHLFEKAKVGNFVEIKKADIGPGSKVNHLSYVGDATVGSNVNIGAGTITCNYDGANKFKTLIEDDVFVGSNTALVAPVTLGKGATIGAGSTVTKDVSDKQLAVARAQQRNIDGWTRPVKK.

The tract at residues 1 to 226 (MSLHIIILAA…LHEVEGVNNR (226 aa)) is pyrophosphorylase. UDP-N-acetyl-alpha-D-glucosamine-binding positions include 8–11 (LAAG), K22, Q73, 78–79 (GT), 100–102 (YGD), G136, E151, N166, and N224. D102 serves as a coordination point for Mg(2+). Position 224 (N224) interacts with Mg(2+). Residues 227–247 (IQLAALERAYQQQVAEELMLA) are linker. The segment at 248–452 (GATLRDPARV…IDGWTRPVKK (205 aa)) is N-acetyltransferase. R330 and K348 together coordinate UDP-N-acetyl-alpha-D-glucosamine. H360 (proton acceptor) is an active-site residue. Positions 363 and 374 each coordinate UDP-N-acetyl-alpha-D-glucosamine. Acetyl-CoA-binding positions include A377, 383–384 (NY), S402, A420, and R437.

It in the N-terminal section; belongs to the N-acetylglucosamine-1-phosphate uridyltransferase family. In the C-terminal section; belongs to the transferase hexapeptide repeat family. As to quaternary structure, homotrimer. The cofactor is Mg(2+).

The protein localises to the cytoplasm. It catalyses the reaction alpha-D-glucosamine 1-phosphate + acetyl-CoA = N-acetyl-alpha-D-glucosamine 1-phosphate + CoA + H(+). It carries out the reaction N-acetyl-alpha-D-glucosamine 1-phosphate + UTP + H(+) = UDP-N-acetyl-alpha-D-glucosamine + diphosphate. The protein operates within nucleotide-sugar biosynthesis; UDP-N-acetyl-alpha-D-glucosamine biosynthesis; N-acetyl-alpha-D-glucosamine 1-phosphate from alpha-D-glucosamine 6-phosphate (route II): step 2/2. It functions in the pathway nucleotide-sugar biosynthesis; UDP-N-acetyl-alpha-D-glucosamine biosynthesis; UDP-N-acetyl-alpha-D-glucosamine from N-acetyl-alpha-D-glucosamine 1-phosphate: step 1/1. It participates in bacterial outer membrane biogenesis; LPS lipid A biosynthesis. In terms of biological role, catalyzes the last two sequential reactions in the de novo biosynthetic pathway for UDP-N-acetylglucosamine (UDP-GlcNAc). The C-terminal domain catalyzes the transfer of acetyl group from acetyl coenzyme A to glucosamine-1-phosphate (GlcN-1-P) to produce N-acetylglucosamine-1-phosphate (GlcNAc-1-P), which is converted into UDP-GlcNAc by the transfer of uridine 5-monophosphate (from uridine 5-triphosphate), a reaction catalyzed by the N-terminal domain. This is Bifunctional protein GlmU from Hahella chejuensis (strain KCTC 2396).